Here is a 181-residue protein sequence, read N- to C-terminus: Disulfide bond formation protein B (181 aa).

At methionine 1–alanine 13 the chain is on the cytoplasmic side. A helical membrane pass occupies residues tryptophan 14–tyrosine 30. Over phenylalanine 31–methionine 48 the chain is Periplasmic. The cysteines at positions 40 and 43 are disulfide-linked. Residues alanine 49 to serine 64 traverse the membrane as a helical segment. At glycine 65–tryptophan 71 the chain is on the cytoplasmic side. The chain crosses the membrane as a helical span at residues alanine 72–tyrosine 89. Residues aspartate 90–glycine 145 lie on the Periplasmic side of the membrane. An intrachain disulfide couples cysteine 105 to cysteine 131. The chain crosses the membrane as a helical span at residues tryptophan 146 to cysteine 164. Residues histidine 165–lysine 181 are Cytoplasmic-facing.

This sequence belongs to the DsbB family.

The protein resides in the cell inner membrane. Functionally, required for disulfide bond formation in some periplasmic proteins. Acts by oxidizing the DsbA protein. This is Disulfide bond formation protein B from Idiomarina loihiensis (strain ATCC BAA-735 / DSM 15497 / L2-TR).